We begin with the raw amino-acid sequence, 392 residues long: L-rhamnonate dehydratase (392 aa).

The substrate site is built by His22 and Arg48. Residues Asp214, Glu240, and Glu268 each coordinate Mg(2+). His318 functions as the Proton acceptor in the catalytic mechanism. Position 338 (Glu338) interacts with substrate.

It belongs to the mandelate racemase/muconate lactonizing enzyme family. RhamD subfamily. As to quaternary structure, homooctamer; tetramer of dimers. Mg(2+) is required as a cofactor.

The catalysed reaction is L-rhamnonate = 2-dehydro-3-deoxy-L-rhamnonate + H2O. Catalyzes the dehydration of L-rhamnonate to 2-keto-3-deoxy-L-rhamnonate (KDR). The sequence is that of L-rhamnonate dehydratase from Burkholderia orbicola (strain MC0-3).